Consider the following 291-residue polypeptide: Ribosomal RNA small subunit methyltransferase H (291 aa).

S-adenosyl-L-methionine-binding positions include 31-33 (GGY), Asp-49, Phe-76, Asp-97, and Gln-104.

The protein belongs to the methyltransferase superfamily. RsmH family.

It localises to the cytoplasm. The enzyme catalyses cytidine(1402) in 16S rRNA + S-adenosyl-L-methionine = N(4)-methylcytidine(1402) in 16S rRNA + S-adenosyl-L-homocysteine + H(+). Its function is as follows. Specifically methylates the N4 position of cytidine in position 1402 (C1402) of 16S rRNA. The chain is Ribosomal RNA small subunit methyltransferase H from Anaplasma marginale (strain St. Maries).